The sequence spans 468 residues: Uronate isomerase (468 aa).

It belongs to the metallo-dependent hydrolases superfamily. Uronate isomerase family.

The enzyme catalyses D-glucuronate = D-fructuronate. The catalysed reaction is aldehydo-D-galacturonate = keto-D-tagaturonate. Its pathway is carbohydrate metabolism; pentose and glucuronate interconversion. The protein is Uronate isomerase of Brachyspira hyodysenteriae (strain ATCC 49526 / WA1).